We begin with the raw amino-acid sequence, 399 residues long: Dihydrolipoyllysine-residue succinyltransferase component of 2-oxoglutarate dehydrogenase complex (399 aa).

In terms of domain architecture, Lipoyl-binding spans 2–77 (AIDIKAPTFP…LSGELLGKLT (76 aa)). Lys43 carries the N6-lipoyllysine modification. The region spanning 104 to 141 (ILSPAARKIAEENAIAADSITGTGKGGRVTKEDAVAAA) is the Peripheral subunit-binding (PSBD) domain. Residues His370 and Asp374 contribute to the active site.

It belongs to the 2-oxoacid dehydrogenase family. Forms a 24-polypeptide structural core with octahedral symmetry. Part of the 2-oxoglutarate dehydrogenase (OGDH) complex composed of E1 (2-oxoglutarate dehydrogenase), E2 (dihydrolipoamide succinyltransferase) and E3 (dihydrolipoamide dehydrogenase); the complex contains multiple copies of the three enzymatic components (E1, E2 and E3). The cofactor is (R)-lipoate.

The catalysed reaction is N(6)-[(R)-dihydrolipoyl]-L-lysyl-[protein] + succinyl-CoA = N(6)-[(R)-S(8)-succinyldihydrolipoyl]-L-lysyl-[protein] + CoA. It participates in amino-acid degradation; L-lysine degradation via saccharopine pathway; glutaryl-CoA from L-lysine: step 6/6. In terms of biological role, E2 component of the 2-oxoglutarate dehydrogenase (OGDH) complex which catalyzes the second step in the conversion of 2-oxoglutarate to succinyl-CoA and CO(2). In Azotobacter vinelandii, this protein is Dihydrolipoyllysine-residue succinyltransferase component of 2-oxoglutarate dehydrogenase complex (sucB).